The primary structure comprises 93 residues: Small ribosomal subunit protein bS18 (93 aa).

It belongs to the bacterial ribosomal protein bS18 family. Part of the 30S ribosomal subunit. Forms a tight heterodimer with protein bS6.

Its function is as follows. Binds as a heterodimer with protein bS6 to the central domain of the 16S rRNA, where it helps stabilize the platform of the 30S subunit. The polypeptide is Small ribosomal subunit protein bS18 (Verminephrobacter eiseniae (strain EF01-2)).